Reading from the N-terminus, the 1307-residue chain is Rho1 guanine nucleotide exchange factor TUS1 (1307 aa).

A compositionally biased stretch (polar residues) spans 1–10; it reads MYRYNRSSPF. Disordered stretches follow at residues 1–144, 164–194, and 219–239; these read MYRY…FIGN, PFAN…SDLR, and EDSE…NVSG. Positions 12 to 29 are enriched in basic and acidic residues; the sequence is RTPEKRVSRQESQRKSIE. The segment covering 37-79 has biased composition (polar residues); that stretch reads NTRNSFLDDSDNGTDNISIGWTPISDTQQFQSPVPQAFTFTSK. Residues 87–97 are compositionally biased toward low complexity; that stretch reads TSSSESTPKST. The span at 176–194 shows a compositional bias: basic and acidic residues; that stretch reads SPRDSSKQQAHFSDESDLR. In terms of domain architecture, DH spans 467–657; it reads QRQSFIFDLI…EKLNFEVNQV (191 aa). In terms of domain architecture, PH spans 715 to 877; it reads KLVLSGTVYK…WIDAIMESFK (163 aa). Residues 780–802 are disordered; the sequence is TSKQPLRNYSQKEHKSPMHNFST. Positions 938-1279 constitute a CNH domain; it reads TTRILCCEDV…KLASSERREK (342 aa).

Interacts with RHO1.

Guanine nucleotide-exchange factor (GEF) for RHO1 that stimulates the exchange of RHO1 GDP-bound form into GTP-bound form. Required for signaling of cell wall defects to RHO1. This Saccharomyces cerevisiae (strain ATCC 204508 / S288c) (Baker's yeast) protein is Rho1 guanine nucleotide exchange factor TUS1 (TUS1).